The primary structure comprises 703 residues: Protein teflon (703 aa).

The segment at Met32–His55 adopts a C2H2-type 1 zinc-finger fold. Disordered regions lie at residues Thr78 to Ser111, Ser138 to Pro161, and Ser339 to Glu434. Composition is skewed to polar residues over residues Gln84–Asp94 and Ser138–Pro147. Residues Pro148–Pro161 show a composition bias toward basic and acidic residues. 2 stretches are compositionally biased toward polar residues: residues Ser339–Val352 and Ser364–Ile373. 2 C2H2-type zinc fingers span residues Tyr649–His672 and Phe677–His700.

Belongs to the Teflon family.

It is found in the nucleus. The protein resides in the chromosome. In terms of biological role, specifically required in males for proper segregation of autosomal bivalents at meiosis I. Expression is required in the male germ line prior to spermatocyte stage S4. May have a role as a bridging molecule maintaining adhesion to hold autosome bivalents together via heterochromatic connections. This is Protein teflon from Drosophila pseudoobscura pseudoobscura (Fruit fly).